The chain runs to 510 residues: ATP synthase subunit alpha (510 aa).

Residue 170-177 coordinates ATP; that stretch reads GDRQTGKT.

The protein belongs to the ATPase alpha/beta chains family. As to quaternary structure, F-type ATPases have 2 components, CF(1) - the catalytic core - and CF(0) - the membrane proton channel. CF(1) has five subunits: alpha(3), beta(3), gamma(1), delta(1), epsilon(1). CF(0) has three main subunits: a(1), b(2) and c(9-12). The alpha and beta chains form an alternating ring which encloses part of the gamma chain. CF(1) is attached to CF(0) by a central stalk formed by the gamma and epsilon chains, while a peripheral stalk is formed by the delta and b chains.

It localises to the cell inner membrane. It catalyses the reaction ATP + H2O + 4 H(+)(in) = ADP + phosphate + 5 H(+)(out). In terms of biological role, produces ATP from ADP in the presence of a proton gradient across the membrane. The alpha chain is a regulatory subunit. The chain is ATP synthase subunit alpha from Caulobacter sp. (strain K31).